The chain runs to 133 residues: UPF0225 protein BPP1723 (133 aa).

Belongs to the UPF0225 family.

The sequence is that of UPF0225 protein BPP1723 from Bordetella parapertussis (strain 12822 / ATCC BAA-587 / NCTC 13253).